A 217-amino-acid chain; its full sequence is Orotidine 5'-phosphate decarboxylase (217 aa).

Substrate contacts are provided by residues Asp14, Lys36, 64-73 (DFKVADIPST), Ser120, 172-182 (PGVGAQGGNLS), Gly197, and Arg198. The active-site Proton donor is Lys66.

It belongs to the OMP decarboxylase family. Type 1 subfamily. As to quaternary structure, homodimer.

It catalyses the reaction orotidine 5'-phosphate + H(+) = UMP + CO2. Its pathway is pyrimidine metabolism; UMP biosynthesis via de novo pathway; UMP from orotate: step 2/2. In terms of biological role, catalyzes the decarboxylation of orotidine 5'-monophosphate (OMP) to uridine 5'-monophosphate (UMP). The polypeptide is Orotidine 5'-phosphate decarboxylase (Methanococcus maripaludis (strain C6 / ATCC BAA-1332)).